A 174-amino-acid polypeptide reads, in one-letter code: Nascent polypeptide-associated complex subunit alpha (174 aa).

The residue at position 2 (Ser2) is an N-acetylserine. Residues 14-78 (NKNEKKAREL…AKVDNFTQKL (65 aa)) enclose the NAC-A/B domain. Residues 85–137 (AQASGIMPSNEDVATKSPEDIQADMQAAAEGSVNAAAEEDDEEGEVDAGDLNK) form a disordered region. Phosphoserine is present on Ser93. Low complexity predominate over residues 111–120 (AAAEGSVNAA). A compositionally biased stretch (acidic residues) spans 121–132 (AEEDDEEGEVDA). Residues 135–174 (LNKDDIELVVQQTNVSKNQAIKALKAHNGDLVNAIMSLSK) enclose the UBA domain.

The protein belongs to the NAC-alpha family. Part of the nascent polypeptide-associated complex (NAC), consisting of EGD2 and either EGD1 or BTT1. NAC associates with ribosomes via EGD1 or BTT1, and with the CCR4-NOT complex.

Its subcellular location is the cytoplasm. The protein localises to the nucleus. Its function is as follows. Component of the nascent polypeptide-associated complex (NAC), a dynamic component of the ribosomal exit tunnel, protecting the emerging polypeptides from interaction with other cytoplasmic proteins to ensure appropriate nascent protein targeting. The NAC complex also promotes mitochondrial protein import by enhancing productive ribosome interactions with the outer mitochondrial membrane and blocks the inappropriate interaction of ribosomes translating non-secretory nascent polypeptides with translocation sites in the membrane of the endoplasmic reticulum. EGD2 may also be involved in transcription regulation. This is Nascent polypeptide-associated complex subunit alpha (EGD2) from Saccharomyces cerevisiae (strain YJM789) (Baker's yeast).